A 77-amino-acid polypeptide reads, in one-letter code: Small, acid-soluble spore protein Tlp (77 aa).

Belongs to the Tlp family.

Its subcellular location is the spore core. This Geobacillus sp. (strain WCH70) protein is Small, acid-soluble spore protein Tlp.